Here is an 879-residue protein sequence, read N- to C-terminus: Beta-mannosidase (879 aa).

An N-terminal signal peptide occupies residues 1–19 (MHLHLLLILALFRAGCVVA). N-linked (GlcNAc...) asparagine glycans are attached at residues Asn35, Asn77, Asn89, and Asn113. A disulfide bridge connects residues Cys167 and Cys176. 190 to 192 (WDW) provides a ligand contact to substrate. Residues Asn226, Asn297, and Asn302 are each glycosylated (N-linked (GlcNAc...) asparagine). Asn456 lines the substrate pocket. Glu457 functions as the Proton donor in the catalytic mechanism. Intrachain disulfides connect Cys540–Cys629, Cys732–Cys761, and Cys764–Cys769. The active-site Nucleophile is the Glu554. Residue Asn736 is glycosylated (N-linked (GlcNAc...) asparagine). N-linked (GlcNAc...) asparagine glycosylation is found at Asn803 and Asn807.

The protein belongs to the glycosyl hydrolase 2 family. In terms of assembly, monomer. Highest level in liver, high levels in lung, testis, skin and spleen, moderate level in thymus. Activity found in plasma, kidney, liver, spleen, pancreas, brain, testis, epididymis, heart, lung and skeletal muscle.

It localises to the lysosome. It catalyses the reaction Hydrolysis of terminal, non-reducing beta-D-mannose residues in beta-D-mannosides.. It participates in glycan metabolism; N-glycan degradation. Its function is as follows. Exoglycosidase that cleaves the single beta-linked mannose residue from the non-reducing end of all N-linked glycoprotein oligosaccharides. In Mus musculus (Mouse), this protein is Beta-mannosidase.